The primary structure comprises 443 residues: ATP-dependent protease ATPase subunit HslU (443 aa).

ATP is bound by residues Ile20, 62-67, Asp255, Glu321, and Arg393; that span reads GVGKTE.

Belongs to the ClpX chaperone family. HslU subfamily. In terms of assembly, a double ring-shaped homohexamer of HslV is capped on each side by a ring-shaped HslU homohexamer. The assembly of the HslU/HslV complex is dependent on binding of ATP.

The protein localises to the cytoplasm. Functionally, ATPase subunit of a proteasome-like degradation complex; this subunit has chaperone activity. The binding of ATP and its subsequent hydrolysis by HslU are essential for unfolding of protein substrates subsequently hydrolyzed by HslV. HslU recognizes the N-terminal part of its protein substrates and unfolds these before they are guided to HslV for hydrolysis. The chain is ATP-dependent protease ATPase subunit HslU from Helicobacter pylori (strain HPAG1).